We begin with the raw amino-acid sequence, 70 residues long: Large ribosomal subunit protein eL38 (70 aa).

It belongs to the eukaryotic ribosomal protein eL38 family.

This is Large ribosomal subunit protein eL38 (RpL38) from Lonomia obliqua (Moth).